The primary structure comprises 68 residues: Protein transport protein Sec61 gamma-1 subunit (68 aa).

The Cytoplasmic segment spans residues 1-32 (MDKVVKFAEPGRAFAKDSIRLVKRCTKPDRKE). A helical membrane pass occupies residues 33-61 (FQKIAIATAVGFAIMGFIGFFVKLIHIPI). At 62-68 (NNIIVGS) the chain is on the extracellular side.

Belongs to the SecE/SEC61-gamma family. Heterotrimeric complex composed of SEC61-alpha, SEC61-beta and SEC61-gamma.

It localises to the endoplasmic reticulum membrane. Its function is as follows. Necessary for protein translocation in the endoplasmic reticulum. This chain is Protein transport protein Sec61 gamma-1 subunit (SEC61G1), found in Drosophila melanogaster (Fruit fly).